The chain runs to 224 residues: Cytidylate kinase (224 aa).

11–19 contacts ATP; it reads GPAAAGKST.

The protein belongs to the cytidylate kinase family. Type 1 subfamily.

It localises to the cytoplasm. The enzyme catalyses CMP + ATP = CDP + ADP. The catalysed reaction is dCMP + ATP = dCDP + ADP. This is Cytidylate kinase from Listeria monocytogenes serotype 4a (strain HCC23).